The sequence spans 343 residues: Ribosomal RNA small subunit methyltransferase C (343 aa).

The protein belongs to the methyltransferase superfamily. RsmC family. As to quaternary structure, monomer.

It is found in the cytoplasm. The enzyme catalyses guanosine(1207) in 16S rRNA + S-adenosyl-L-methionine = N(2)-methylguanosine(1207) in 16S rRNA + S-adenosyl-L-homocysteine + H(+). Its function is as follows. Specifically methylates the guanine in position 1207 of 16S rRNA in the 30S particle. The chain is Ribosomal RNA small subunit methyltransferase C from Escherichia fergusonii (strain ATCC 35469 / DSM 13698 / CCUG 18766 / IAM 14443 / JCM 21226 / LMG 7866 / NBRC 102419 / NCTC 12128 / CDC 0568-73).